The sequence spans 208 residues: Protein-L-isoaspartate O-methyltransferase (208 aa).

Residue S59 is part of the active site.

Belongs to the methyltransferase superfamily. L-isoaspartyl/D-aspartyl protein methyltransferase family.

The protein resides in the cytoplasm. It catalyses the reaction [protein]-L-isoaspartate + S-adenosyl-L-methionine = [protein]-L-isoaspartate alpha-methyl ester + S-adenosyl-L-homocysteine. Its function is as follows. Catalyzes the methyl esterification of L-isoaspartyl residues in peptides and proteins that result from spontaneous decomposition of normal L-aspartyl and L-asparaginyl residues. It plays a role in the repair and/or degradation of damaged proteins. The chain is Protein-L-isoaspartate O-methyltransferase from Escherichia coli O7:K1 (strain IAI39 / ExPEC).